The chain runs to 469 residues: Coiled-coil domain-containing protein 6 (469 aa).

Acidic residues predominate over residues M1–T10. Residues M1–G37 form a disordered region. A2 bears the N-acetylalanine mark. Residue S45 is modified to Phosphoserine. Residues F47 to S320 are a coiled coil. 3 tandem repeats follow at residues E99–Y127, E128–L156, and E157–L185. The interval E99–L228 is 5 X 29 AA tandem repeats. The stretch at E186–L199 is one 4; approximate repeat. Residues E200–L228 form repeat 5. Residues S233, S237, S242, S247, S277, and S316 each carry the phosphoserine modification. Residues A335 to G362 are disordered. T342 carries the phosphothreonine modification. A compositionally biased stretch (low complexity) spans S344–P361. 2 positions are modified to phosphoserine: S356 and S360. Position 380 is an omega-N-methylarginine (R380). Residues S388 and S406 each carry the phosphoserine modification. Positions Q394 to P469 are disordered. The span at P419 to P444 shows a compositional bias: pro residues. Residues P435–P444 carry the SH3-binding motif. Positions Q460–P469 are enriched in low complexity.

The protein resides in the cytoplasm. It is found in the cytoskeleton. This Mus musculus (Mouse) protein is Coiled-coil domain-containing protein 6 (Ccdc6).